The following is a 310-amino-acid chain: Olfactory receptor 2A7 (310 aa).

Topologically, residues 1–24 are extracellular; it reads MGNNMTLITEFILLGFPLSPRMQM. Residue Asn4 is glycosylated (N-linked (GlcNAc...) asparagine). Residues 25-45 form a helical membrane-spanning segment; it reads LLFALFSLFYAFTLLGNGTIV. Topologically, residues 46–53 are cytoplasmic; sequence GLICLDSR. Residues 54–74 traverse the membrane as a helical segment; the sequence is LHTPMYFFLSHLAIVDIAYAC. Residues 75-96 lie on the Extracellular side of the membrane; the sequence is NTVPQMLVNLLDPVKPISYAGC. A disulfide bond links Cys96 and Cys178. Residues 97–117 traverse the membrane as a helical segment; sequence MTQTFLFLTFAITECLLLVVM. The Cytoplasmic portion of the chain corresponds to 118-148; the sequence is SYDRYVAICHPLRYSAIMSWRVCSTMAVTSW. A helical membrane pass occupies residues 149-169; the sequence is IIGVLLSLIHLVLLLPLPFCV. Over 170–204 the chain is Extracellular; that stretch reads SQKVNHFFCEITAILKLACADTHLNETMVLAGAVS. The N-linked (GlcNAc...) asparagine glycan is linked to Asn194. A helical membrane pass occupies residues 205–225; that stretch reads VLVGPFSSIVVSYACILGAIL. The Cytoplasmic segment spans residues 226 to 239; it reads KIQSEEGQRKAFST. The helical transmembrane segment at 240–260 threads the bilayer; it reads CSSHLCVVGLFYGTAIVMYVG. Residues 261 to 273 lie on the Extracellular side of the membrane; the sequence is PRHGSPKEQKKYL. The helical transmembrane segment at 274–291 threads the bilayer; the sequence is LLFHSLFNPMLNPLIYSL. At 292–310 the chain is on the cytoplasmic side; the sequence is RNSDVKNTLKRVLRTQRAL.

It belongs to the G-protein coupled receptor 1 family. Olfactory epithelium.

It localises to the cell membrane. Functionally, odorant receptor. This Mus musculus (Mouse) protein is Olfactory receptor 2A7.